The primary structure comprises 1074 residues: Phospholipase D1 (1074 aa).

In terms of domain architecture, PX spans 81-212 (IKAQVLEVER…TEFLDISQLS (132 aa)). The 110-residue stretch at 219-328 (PKGIEGMIMK…WGGAIEEFIQ (110 aa)) folds into the PH domain. 2 S-palmitoyl cysteine lipidation sites follow: Cys-240 and Cys-241. In terms of domain architecture, PLD phosphodiesterase 1 spans 459 to 486 (YLWAHHEKLVIIDQSVAFVGGIDLAYGR). The segment at 463-928 (HHEKLVIIDQ…MLGKRDSEMA (466 aa)) is catalytic. Phosphoserine occurs at positions 499, 561, and 629. The region spanning 891–918 (ELIYVHSKLLIADDNTVIIGSANINDRS) is the PLD phosphodiesterase 2 domain.

Belongs to the phospholipase D family. As to quaternary structure, interacts with PIP5K1B. As to expression, expressed abundantly in the pancreas and heart and at high levels in brain, placenta, spleen, uterus and small intestine.

It localises to the cytoplasm. It is found in the perinuclear region. The protein resides in the endoplasmic reticulum membrane. Its subcellular location is the golgi apparatus membrane. The protein localises to the late endosome membrane. The catalysed reaction is a 1,2-diacyl-sn-glycero-3-phosphocholine + H2O = a 1,2-diacyl-sn-glycero-3-phosphate + choline + H(+). It catalyses the reaction ethanol + a 1,2-diacyl-sn-glycero-3-phosphocholine = 1,2-diacyl-sn-glycero-3-phosphoethanol + choline. The enzyme catalyses 1,2-dihexadecanoyl-sn-glycero-3-phosphocholine + H2O = 1,2-dihexadecanoyl-sn-glycero-3-phosphate + choline + H(+). Its activity is regulated as follows. Stimulated by phosphatidylinositol 4,5-bisphosphate and phosphatidylinositol 3,4,5-trisphosphate, activated by the phosphokinase C-alpha, by the ADP-ribosylation factor-1 (ARF-1), and to a lesser extent by GTP-binding proteins: RHO A, RAC-1 and CDC42. Inhibited by oleate. Its function is as follows. Function as phospholipase selective for phosphatidylcholine. Implicated as a critical step in numerous cellular pathways, including signal transduction, membrane trafficking, and the regulation of mitosis. May be involved in the regulation of perinuclear intravesicular membrane traffic. The polypeptide is Phospholipase D1 (Homo sapiens (Human)).